Here is a 352-residue protein sequence, read N- to C-terminus: Aspartic protease Bla g 2 (352 aa).

Residues 1–19 (MIGLKLVTVLFAVATITHA) form the signal peptide. Residues 20–24 (AELQR) constitute a propeptide, removed in mature form. Positions 39–346 (YAGITKIGNQ…NWENKTMGFG (308 aa)) constitute a Peptidase A1 domain. The active site involves D55. Disulfide bonds link C59/C151, C68/C73, and C75/C136. N117 carries an N-linked (GlcNAc...) asparagine glycan. Zn(2+) contacts are provided by H178 and H186. D239 is an active-site residue. Intrachain disulfides connect C261-C272 and C276-C309. A glycan (N-linked (GlcNAc...) asparagine) is linked at N295. Zn(2+) is bound by residues D326 and D330. N340 is a glycosylation site (N-linked (GlcNAc...) asparagine).

Belongs to the peptidase A1 family. As to quaternary structure, homodimer.

Functionally, functions as a digestive enzyme in the cockroach. The polypeptide is Aspartic protease Bla g 2 (Blattella germanica (German cockroach)).